The following is a 457-amino-acid chain: UDP-N-acetylglucosamine 1-carboxyvinyltransferase (457 aa).

34–35 contributes to the phosphoenolpyruvate binding site; the sequence is KN. Arg104 contacts UDP-N-acetyl-alpha-D-glucosamine. The Proton donor role is filled by Cys128. 2-(S-cysteinyl)pyruvic acid O-phosphothioketal is present on Cys128. Residues Asp319 and Ile341 each contribute to the UDP-N-acetyl-alpha-D-glucosamine site. Positions 436–457 are disordered; it reads INKSKNRSSNSKLKEVSEIRAA. Residues 447 to 457 show a composition bias toward basic and acidic residues; sequence KLKEVSEIRAA.

The protein belongs to the EPSP synthase family. MurA subfamily.

It localises to the cytoplasm. The catalysed reaction is phosphoenolpyruvate + UDP-N-acetyl-alpha-D-glucosamine = UDP-N-acetyl-3-O-(1-carboxyvinyl)-alpha-D-glucosamine + phosphate. It functions in the pathway cell wall biogenesis; peptidoglycan biosynthesis. In terms of biological role, cell wall formation. Adds enolpyruvyl to UDP-N-acetylglucosamine. This is UDP-N-acetylglucosamine 1-carboxyvinyltransferase from Prochlorococcus marinus subsp. pastoris (strain CCMP1986 / NIES-2087 / MED4).